The following is a 66-amino-acid chain: Large ribosomal subunit protein bL33c (66 aa).

It belongs to the bacterial ribosomal protein bL33 family.

The protein localises to the plastid. It localises to the chloroplast. In Phalaenopsis aphrodite subsp. formosana (Moth orchid), this protein is Large ribosomal subunit protein bL33c.